The primary structure comprises 208 residues: Outer-membrane lipoprotein LolB (208 aa).

A signal peptide spans 1–17; that stretch reads MIRRLLGVALLTGAITG. The N-palmitoyl cysteine moiety is linked to residue Cys18. Cys18 is lipidated: S-diacylglycerol cysteine.

This sequence belongs to the LolB family. Monomer.

It is found in the cell outer membrane. Plays a critical role in the incorporation of lipoproteins in the outer membrane after they are released by the LolA protein. This chain is Outer-membrane lipoprotein LolB, found in Marinobacter nauticus (strain ATCC 700491 / DSM 11845 / VT8) (Marinobacter aquaeolei).